Consider the following 261-residue polypeptide: Undecaprenyl-diphosphatase (261 aa).

A run of 8 helical transmembrane segments spans residues 9–31 (ALLL…GHLT), 46–66 (FLKT…LLLY), 80–100 (IAVA…LIKG), 102–122 (ILGN…VLLF), 137–157 (ALPL…ALFP), 180–200 (AEFS…YDLW), 209–229 (GGWS…LVTV), and 240–260 (GFRP…FFFL).

Belongs to the UppP family.

It is found in the cell inner membrane. It carries out the reaction di-trans,octa-cis-undecaprenyl diphosphate + H2O = di-trans,octa-cis-undecaprenyl phosphate + phosphate + H(+). Functionally, catalyzes the dephosphorylation of undecaprenyl diphosphate (UPP). Confers resistance to bacitracin. The protein is Undecaprenyl-diphosphatase of Thermus thermophilus (strain ATCC 27634 / DSM 579 / HB8).